The sequence spans 360 residues: MAISPEVEHPNKAFGFAARDPSGLLSPFNFSRRATGEHDVQFKVLYCGICHSDLHMIKNEWGFTKYPIVPGHEIVGVVTEVGSKVEKFKVGDKVGVGCLVGSCRKCDMCSQDLENYCPDQILTYSATYTDGTTTYGGYSSLMVADEHFVIRWPENLPMDIGAPLLCAGITTYSPLRHFGLDKPGTHVGIVGLGGLGHVAVKFAKAFGAKVTVISTSEGKKQEAVEKLGADAFLVSRDPEQMQAAAATLDGIIDTVSAVHPILPLVNLLKSQGKLIMVGAPEKPIELPVFPLLLGRKIVAGSAIGGLKETQDMIDFAAKHNILPDVELIPMDYVNTAMERLLKADVKYRFVIDICNTLKSA.

One can recognise an Enoyl reductase (ER) domain in the interval 23 to 351; that stretch reads GLLSPFNFSR…KADVKYRFVI (329 aa). Cys-50 provides a ligand contact to Zn(2+). Ser-52 is an an alcohol binding site. Ser-52 is an NADP(+) binding site. 8 residues coordinate Zn(2+): Asp-53, His-72, Glu-73, Cys-103, Cys-106, Cys-109, Cys-117, and Cys-166. An alcohol is bound at residue His-72. Residues Leu-192, Gly-194, Leu-195, Ser-214, Thr-215, Ser-216, Lys-219, Lys-220, Val-277, Ala-279, Ser-301, and Arg-348 each coordinate NADP(+).

This sequence belongs to the zinc-containing alcohol dehydrogenase family. Class-P subfamily. As to quaternary structure, homodimer. Requires Zn(2+) as cofactor. Confined to roots.

Its subcellular location is the cytoplasm. The catalysed reaction is (2R)-1,2-dihydrovomilenine + NADP(+) = vomilenine + NADPH + H(+). Its pathway is alkaloid biosynthesis; ajmaline biosynthesis. Its activity is regulated as follows. Inhibited by EDTA and p-hydroxymercuribenzoate, a sulfhydryl reagent. Its function is as follows. Alcohol dehydrogenase involved in the biosynthesis of ajmaline-type monoterpenoid indole alkaloids (MIAs) natural products, important plant-derived pharmaceuticals used in the therapy of heart disorders. Catalyzes the conversion of vomilenine to 1,2-dihydrovomilenine, an intermediate chemical in the biosynthesis of ajmaline. This Rauvolfia serpentina (Serpentine wood) protein is Vomilenine reductase.